Here is a 163-residue protein sequence, read N- to C-terminus: MPKAPDCSELSDSCSLAGGTGRFSGPLHRAWRMMNFRQRMGWIGVGLYLLASAAAFYYVFEINETYNRLALEHILQHPEEPREGTTWTHSLKARLLSLPFWLWTIIFLIPYLQMFLFLYSCTRADPKTVGYCIIPICLAVICNRHQAFVKASNQISRLQLIDT.

A run of 2 helical transmembrane segments spans residues 40 to 60 (MGWI…YYVF) and 98 to 118 (LPFW…FLFL).

This sequence belongs to the LYSET family. As to quaternary structure, interacts with GNPTAB; this interaction is important for proper localization of GNPTAB in Golgi stacks. Interacts with MBTPS1.

Its subcellular location is the golgi apparatus membrane. Required for mannose-6-phosphate-dependent trafficking of lysosomal enzymes. LYSET bridges GlcNAc-1-phosphate transferase (GNPTAB), to the membrane-bound transcription factor site-1 protease (MBTPS1), thus allowing proteolytic activation of the GNPTAB. GNPTAB is involved in the regulation of M6P-dependent Golgi-to-lysosome trafficking of lysosomal enzymes. LYSET is thus an essential factor for maturation and delivery of lysosomal hydrolases. Plays an essential function for cells that depend on lysosomal catabolism to generate nutrients. In Mus musculus (Mouse), this protein is Lysosomal enzyme trafficking factor (Lyset).